We begin with the raw amino-acid sequence, 258 residues long: HVA22-like protein j (258 aa).

The interval 153–258 (AANQPPTERN…RSNSRTQPAA (106 aa)) is disordered. A compositionally biased stretch (polar residues) spans 156-169 (QPPTERNVNMNAQS). Residues 206–215 (WPPPTPPPTP) show a composition bias toward pro residues.

This sequence belongs to the DP1 family.

This chain is HVA22-like protein j (HVA22J), found in Arabidopsis thaliana (Mouse-ear cress).